The following is a 196-amino-acid chain: ATP-dependent Clp protease proteolytic subunit (196 aa).

Residue serine 101 is the Nucleophile of the active site. Residue histidine 126 is part of the active site.

Belongs to the peptidase S14 family. Component of the chloroplastic Clp protease core complex.

The protein resides in the plastid. The protein localises to the chloroplast stroma. It carries out the reaction Hydrolysis of proteins to small peptides in the presence of ATP and magnesium. alpha-casein is the usual test substrate. In the absence of ATP, only oligopeptides shorter than five residues are hydrolyzed (such as succinyl-Leu-Tyr-|-NHMec, and Leu-Tyr-Leu-|-Tyr-Trp, in which cleavage of the -Tyr-|-Leu- and -Tyr-|-Trp bonds also occurs).. Functionally, cleaves peptides in various proteins in a process that requires ATP hydrolysis. Has a chymotrypsin-like activity. Plays a major role in the degradation of misfolded proteins. This chain is ATP-dependent Clp protease proteolytic subunit, found in Citrus sinensis (Sweet orange).